A 566-amino-acid polypeptide reads, in one-letter code: Ubiquitin carboxyl-terminal hydrolase 21 (566 aa).

Basic and acidic residues-rich tracts occupy residues 1–14 (MPQA…RTRE) and 58–70 (PPDE…ELGR). 2 disordered regions span residues 1–103 (MPQA…LPLP) and 146–169 (PEPP…PPTL). 2 stretches are compositionally biased toward low complexity: residues 71 to 81 (GRTSGSRPRGP) and 151 to 160 (LRRSTSLRRL). The Nuclear export signal signature appears at 134–152 (ELGAALSRLALRPEPPTLR). The USP domain maps to 212–559 (VGLRNLGNTC…EGYVLFYQLM (348 aa)). Catalysis depends on cysteine 221, which acts as the Nucleophile. The disordered stretch occupies residues 324-349 (APPILASGPVPSPPRRGGGALHEEPE). Residues cysteine 385, cysteine 388, cysteine 438, and cysteine 441 each coordinate Zn(2+). Histidine 519 (proton acceptor) is an active-site residue.

Belongs to the peptidase C19 family. USP21 subfamily. Interacts with BEND3.

The protein localises to the cytoplasm. It localises to the nucleus. The catalysed reaction is Thiol-dependent hydrolysis of ester, thioester, amide, peptide and isopeptide bonds formed by the C-terminal Gly of ubiquitin (a 76-residue protein attached to proteins as an intracellular targeting signal).. Functionally, deubiquitinates histone H2A, a specific tag for epigenetic transcriptional repression, thereby acting as a coactivator. Deubiquitination of histone H2A releaves the repression of di- and trimethylation of histone H3 at 'Lys-4', resulting in regulation of transcriptional initiation. Regulates gene expression via histone H2A deubiquitination. Deubiquitinates BAZ2A/TIP5 leading to its stabilization. Also capable of removing NEDD8 from NEDD8 conjugates but has no effect on Sentrin-1 conjugates. Also acts as a negative regulator of the ribosome quality control (RQC) by mediating deubiquitination of 40S ribosomal proteins RPS10/eS10 and RPS20/uS10, thereby antagonizing ZNF598-mediated 40S ubiquitination. The polypeptide is Ubiquitin carboxyl-terminal hydrolase 21 (Mus musculus (Mouse)).